The chain runs to 534 residues: CTP synthase (534 aa).

The tract at residues Met-1–Leu-266 is amidoligase domain. Position 14 (Ser-14) interacts with CTP. Ser-14 is a UTP binding site. ATP contacts are provided by residues Ser-15–Leu-20 and Asp-72. Residues Asp-72 and Glu-140 each coordinate Mg(2+). CTP-binding positions include Asp-147–Glu-149, Lys-187–Gln-192, and Lys-223. Residues Lys-187–Gln-192 and Lys-223 each bind UTP. In terms of domain architecture, Glutamine amidotransferase type-1 spans Lys-291–Lys-534. Position 353 (Gly-353) interacts with L-glutamine. Cys-380 serves as the catalytic Nucleophile; for glutamine hydrolysis. L-glutamine is bound by residues Phe-381 to Gln-384, Glu-404, and Arg-464. Active-site residues include His-509 and Glu-511.

It belongs to the CTP synthase family. In terms of assembly, homotetramer.

The enzyme catalyses UTP + L-glutamine + ATP + H2O = CTP + L-glutamate + ADP + phosphate + 2 H(+). It catalyses the reaction L-glutamine + H2O = L-glutamate + NH4(+). The catalysed reaction is UTP + NH4(+) + ATP = CTP + ADP + phosphate + 2 H(+). It functions in the pathway pyrimidine metabolism; CTP biosynthesis via de novo pathway; CTP from UDP: step 2/2. With respect to regulation, allosterically activated by GTP, when glutamine is the substrate; GTP has no effect on the reaction when ammonia is the substrate. The allosteric effector GTP functions by stabilizing the protein conformation that binds the tetrahedral intermediate(s) formed during glutamine hydrolysis. Inhibited by the product CTP, via allosteric rather than competitive inhibition. Functionally, catalyzes the ATP-dependent amination of UTP to CTP with either L-glutamine or ammonia as the source of nitrogen. Regulates intracellular CTP levels through interactions with the four ribonucleotide triphosphates. The sequence is that of CTP synthase from Bdellovibrio bacteriovorus (strain ATCC 15356 / DSM 50701 / NCIMB 9529 / HD100).